We begin with the raw amino-acid sequence, 418 residues long: Adenosylhomocysteinase (418 aa).

Substrate-binding residues include Thr-53, Asp-125, and Glu-150. An NAD(+)-binding site is contributed by 151–153; sequence TTT. Positions 180 and 184 each coordinate substrate. NAD(+) contacts are provided by residues Asn-185, 214-219, Glu-237, Asn-272, 293-295, and Asn-340; these read GYGWCG and SGH.

The protein belongs to the adenosylhomocysteinase family. Requires NAD(+) as cofactor.

It is found in the cytoplasm. The catalysed reaction is S-adenosyl-L-homocysteine + H2O = L-homocysteine + adenosine. The protein operates within amino-acid biosynthesis; L-homocysteine biosynthesis; L-homocysteine from S-adenosyl-L-homocysteine: step 1/1. In terms of biological role, may play a key role in the regulation of the intracellular concentration of adenosylhomocysteine. The protein is Adenosylhomocysteinase of Aquifex aeolicus (strain VF5).